The chain runs to 356 residues: MTEAKPVRVAVVYGGRSSEHSVSCISAGAIMEHLDPEKYEVVPIGITREGTWTQGNRAGLNIVDGRLPEVELHDELALSLNPATRGRIHNVTRHEHYTEVDVIVPVLHGPYGEDGTVQGLFELSGIPYVGAGVLASAVGMDKEFTKKLLVAEGLPVAPQEVLTGEATLDDLQKERLGLPVFVKPARGGSSIGVSKVSAWEDLEAALTLAYESDDKVLIEPEISGAEVEVGVLERPDGSLQASVPAKILGTTESEEGFYDFDAKYIDEGVSAAIPAPLSEELTAELRQRAIEAFRALGASGLSRVDFFVSDYSYCINEVNTFPGFTPISMYPQVFAAVGVGYAELLDTLIQTALARS.

The ATP-grasp domain occupies 146-350; it reads KKLLVAEGLP…YAELLDTLIQ (205 aa). ATP is bound at residue 173 to 228; it reads KERLGLPVFVKPARGGSSIGVSKVSAWEDLEAALTLAYESDDKVLIEPEISGAEVE. Residues D305, E317, and N319 each coordinate Mg(2+).

The protein belongs to the D-alanine--D-alanine ligase family. The cofactor is Mg(2+). It depends on Mn(2+) as a cofactor.

Its subcellular location is the cytoplasm. The enzyme catalyses 2 D-alanine + ATP = D-alanyl-D-alanine + ADP + phosphate + H(+). The protein operates within cell wall biogenesis; peptidoglycan biosynthesis. Cell wall formation. The chain is D-alanine--D-alanine ligase from Corynebacterium aurimucosum (strain ATCC 700975 / DSM 44827 / CIP 107346 / CN-1) (Corynebacterium nigricans).